The sequence spans 522 residues: Response regulator mcs4 (522 aa).

Positions 148–274 (DSLESPVSAP…RSISHSSLYT (127 aa)) are disordered. Residues 174–194 (NLRNASRTRSHQTLPSSNVNK) show a composition bias toward polar residues. The segment covering 244 to 255 (RSDESTAEKLAK) has biased composition (basic and acidic residues). Positions 260 to 274 (TPTNSRSISHSSLYT) are enriched in polar residues. The Response regulatory domain occupies 363 to 505 (NVLIVEDNII…WLEKKITEWG (143 aa)). At aspartate 412 the chain carries 4-aspartylphosphate.

The protein resides in the cytoplasm. Its function is as follows. Response regulator that coordinately controls the stress activated wak1-wis1-sty1 MAP kinase pathway and fission yeast cell cycle. The sequence is that of Response regulator mcs4 (mcs4) from Schizosaccharomyces pombe (strain 972 / ATCC 24843) (Fission yeast).